A 529-amino-acid chain; its full sequence is uncharacterized protein (529 aa).

Residues 178–186 (TSGTTGQPK), D401, R416, and K510 contribute to the ATP site.

This sequence belongs to the ATP-dependent AMP-binding enzyme family.

This is an uncharacterized protein from Bacillus subtilis (strain 168).